A 279-amino-acid polypeptide reads, in one-letter code: Pantothenate synthetase (279 aa).

An ATP-binding site is contributed by 26 to 33 (MGNLHEGH). The Proton donor role is filled by His33. Residue Gln57 participates in (R)-pantoate binding. Position 57 (Gln57) interacts with beta-alanine. 144–147 (GKKD) is an ATP binding site. Gln150 contributes to the (R)-pantoate binding site. Residues Val173 and 181–184 (LSSR) each bind ATP.

It belongs to the pantothenate synthetase family. As to quaternary structure, homodimer.

The protein localises to the cytoplasm. The catalysed reaction is (R)-pantoate + beta-alanine + ATP = (R)-pantothenate + AMP + diphosphate + H(+). Its pathway is cofactor biosynthesis; (R)-pantothenate biosynthesis; (R)-pantothenate from (R)-pantoate and beta-alanine: step 1/1. Catalyzes the condensation of pantoate with beta-alanine in an ATP-dependent reaction via a pantoyl-adenylate intermediate. This is Pantothenate synthetase from Burkholderia ambifaria (strain MC40-6).